Here is a 1174-residue protein sequence, read N- to C-terminus: MEELIWEQYTVTLQKDSKRGFGIAVSGGRDNPHFENGETSIVISDVLPGGPADGLLQENDRVVMVNGTPMEDVLHSFAVQQLRKSGKIAAIVVKRPRKVQLAPPQGSLPVDEDDRAFEVMDEFDGRSARSGYSERSRRSSHGGRSRSWEDSPERGRPHERAWSQERERSRGRSLERGLDHDDDYRRPRERSRGRSLERGLDHDDDYGRPGERSHGMSTDRGYDRGYDRGYDRGYDRTYSPEAEYGRRTQPDARHAGSRSRSREHLRSRSPSPELRGRPDHAGQPDSDRPIGVLLMKSKANEEYGLRLGSQIFIKQMTRTALATKDGNLHEGDIILKINGTVTENMSLTDARKLIEKSRGKLQLVVLRDSKQTLINIPSLNDSDSEIEDISEIESNRSFSPEERRQQYSDYDYHSSNEKLKERPNSREDMQNRWSRMGATPTPFKSMGDIASVVGTENSKEPRYQEEPPAPQPKAAPRTFLRPSPEDEAIYGPNTKMVRFKKGDSVGLRLAGGNDVGIFVAGIQEGTSAEQEGLQEGDQILKVNTQDFRGLVREDAVLYLLEIPKGEMVTILAQSRADVYRDILACGRGDSFFIRSHFECEKETPQSLAFSRGEVFRVVDTLYDGKLGHWLAVRIGNELEKGLIPNKSRAEQMASVQNAQRDNAGDRADFWRMRGQRSGMKKNLRKSREDLTAAVSVSTKFPAYERVLLREAGFKRPVVLFGPIADIALEKLANELPDLFQTAKTEPKDAGSEKSSGVVRLNTVRQIIEQDKHALLDVTPKAVDLLNYTQWFPIVIFFNPDSRQGVKTMRQRLNPTSNKSSRKLYDQANKLKKTCAHLFTATINLNSANDSWFGSLKDTIQHQQGEAVWVSEGKMEGMDDDPEDRMSYLTAMGADYLSCDSRLISDFEDTDGEGGAYTDNELDEPAEEPLVSSITRSSEPVQHEESIRKPSPEPRAQMRRAASRDQLRDSSPPPAFKPEPPKAKTQNREESFDISRSHDYKSNPSAVAGNEVSGASTRSCPPPIAAKPSFGRSILKPSTPVPSPESEEVGEGSEEQEGAPKSVLGKVKIFEKMDHKARLQRMQELQEAQNARIEIAQKHPDIYAVPIKTHKPDPGLSQHTSSRPPEPQKGPSRLYQDPRGSYGSDAEEEEYRQQLSEHSKRGYYSQPSRYRDTEL.

A PDZ 1 domain is found at 10–97; that stretch reads TVTLQKDSKR…IAAIVVKRPR (88 aa). Residues serine 107, serine 127, serine 130, serine 140, serine 145, serine 147, serine 151, serine 173, serine 195, and serine 217 each carry the phosphoserine modification. The span at 125 to 137 shows a compositional bias: basic and acidic residues; it reads GRSARSGYSERSR. Positions 125 to 290 are disordered; it reads GRSARSGYSE…AGQPDSDRPI (166 aa). Residues 146-214 are compositionally biased toward basic and acidic residues; the sequence is RSWEDSPERG…DYGRPGERSH (69 aa). Basic and acidic residues predominate over residues 220–235; that stretch reads RGYDRGYDRGYDRGYD. Serine 239 bears the Phosphoserine mark. Composition is skewed to basic and acidic residues over residues 243-266 and 274-288; these read EYGR…EHLR and LRGR…DSDR. A PDZ 2 domain is found at 291–369; the sequence is GVLLMKSKAN…KLQLVVLRDS (79 aa). 8 positions are modified to phosphoserine: serine 309, serine 382, serine 384, serine 390, serine 399, serine 408, serine 414, and serine 415. Residues 391 to 430 are disordered; the sequence is EIESNRSFSPEERRQQYSDYDYHSSNEKLKERPNSREDMQ. Positions 399–430 are enriched in basic and acidic residues; sequence SPEERRQQYSDYDYHSSNEKLKERPNSREDMQ. Phosphothreonine is present on threonine 439. The interval 456–490 is disordered; sequence ENSKEPRYQEEPPAPQPKAAPRTFLRPSPEDEAIY. Serine 483 carries the post-translational modification Phosphoserine. The region spanning 493–574 is the PDZ 3 domain; that stretch reads NTKMVRFKKG…GEMVTILAQS (82 aa). At tyrosine 558 the chain carries Phosphotyrosine. The 66-residue stretch at 588–653 folds into the SH3 domain; sequence GDSFFIRSHF…PNKSRAEQMA (66 aa). Positions 679-860 constitute a Guanylate kinase-like domain; sequence MKKNLRKSRE…WFGSLKDTIQ (182 aa). Serine 686 and serine 886 each carry phosphoserine. A Phosphothreonine modification is found at threonine 889. Serine 897 and serine 904 each carry phosphoserine. 2 disordered regions span residues 904–1065 and 1100–1174; these read SDFE…VLGK and DIYA…DTEL. Phosphothreonine is present on residues threonine 909 and threonine 917. Over residues 940–951 the composition is skewed to basic and acidic residues; sequence VQHEESIRKPSP. A phosphoserine mark is found at serine 950, serine 962, serine 970, serine 990, and serine 1052. Residues 978-1000 are compositionally biased toward basic and acidic residues; that stretch reads EPPKAKTQNREESFDISRSHDYK. Residues 1044-1056 are compositionally biased toward acidic residues; the sequence is ESEEVGEGSEEQE. Position 1102 is a phosphotyrosine (tyrosine 1102). Phosphoserine is present on residues serine 1131 and serine 1143. The segment covering 1150-1159 has biased composition (basic and acidic residues); it reads YRQQLSEHSK. Residues 1172-1174 are interaction with SCRIB; sequence TEL.

It belongs to the MAGUK family. Homodimer. Interacts (via PDZ2 domain) with TJP1/ZO1 (via PDZ2 domain). Interacts with UBN1. Interacts with SCRIB. Interacts with OCLN. Interacts with SAFB in the nucleus. Interacts with USP53 (via the C-terminal region). Interacts with claudins, including CLDN1, CLDN2, CLDN3, CLDN5 and CLDN7. Interacts with CLDN18. Interacts (via N-terminus) with CTNNA1. In terms of processing, phosphorylated.

It is found in the cell junction. It localises to the adherens junction. The protein resides in the cell membrane. Its subcellular location is the nucleus. The protein localises to the tight junction. Plays a role in tight junctions and adherens junctions. Acts as a positive regulator of RANKL-induced osteoclast differentiation, potentially via mediating downstream transcriptional activity. The protein is Tight junction protein 2 of Canis lupus familiaris (Dog).